A 248-amino-acid chain; its full sequence is Phosphatidylglycerol--prolipoprotein diacylglyceryl transferase (248 aa).

The next 3 helical transmembrane spans lie at 6–26 (FTLF…GMIL), 47–67 (NIAI…YVVF), and 84–104 (GGGL…YIYT). Position 130 (R130) interacts with a 1,2-diacyl-sn-glycero-3-phospho-(1'-sn-glycerol). The next 2 membrane-spanning stretches (helical) occupy residues 186–206 (GQVI…IEGL) and 218–238 (MAQV…VYLS).

It belongs to the Lgt family.

The protein resides in the cell membrane. The enzyme catalyses L-cysteinyl-[prolipoprotein] + a 1,2-diacyl-sn-glycero-3-phospho-(1'-sn-glycerol) = an S-1,2-diacyl-sn-glyceryl-L-cysteinyl-[prolipoprotein] + sn-glycerol 1-phosphate + H(+). It functions in the pathway protein modification; lipoprotein biosynthesis (diacylglyceryl transfer). In terms of biological role, catalyzes the transfer of the diacylglyceryl group from phosphatidylglycerol to the sulfhydryl group of the N-terminal cysteine of a prolipoprotein, the first step in the formation of mature lipoproteins. This is Phosphatidylglycerol--prolipoprotein diacylglyceryl transferase from Clostridioides difficile (strain 630) (Peptoclostridium difficile).